The sequence spans 364 residues: Protein spindle-F (364 aa).

The interval 1-26 (MEASAAKITPMASSMSASGSTNSPSS) is disordered. The segment covering 9 to 26 (TPMASSMSASGSTNSPSS) has biased composition (low complexity). The stretch at 32 to 114 (ALQVALQTIK…GMVSNENRRL (83 aa)) forms a coiled coil. Residue Ser-53 is modified to Phosphoserine. Positions 56-75 (EENQQLREASSRSEGAPRAN) are disordered. Phosphoserine occurs at positions 85, 172, and 202. Residues 210–243 (AKRCLDGLQELRREAMKQQQELRSVMTLLENRIA) are a coiled coil. Ser-264 and Ser-270 each carry phosphoserine. The UBZ1-type zinc-finger motif lies at 310 to 336 (EKTCPMCGKQYSSQVSFNAFREHVEMH). Residues Cys-313 and Cys-316 each coordinate Zn(2+). Ser-325 carries the post-translational modification Phosphoserine. Positions 332 and 336 each coordinate Zn(2+). Position 349 is a phosphoserine (Ser-349).

Forms homooligomers. Interacts with the dynein light chain ctp. Interacts (via C-terminus) with IKKepsilon; this leads to phosphorylation of spn-F. Forms ternary complexes with ctp and IKKepsilon; this is required for spn-F redistribution from puncta in larval neurons and for dendrite pruning. Interacts with ctp and IKKepsilon through distinct regions. Interacts (via C-terminus) with jvl. Phosphorylated by IKKepsilon. Phosphorylation is required for spn-F neuronal distribution and dendrite pruning and reduces spn-F homooligomerization. It does not lead to spn-F degradation. In pupal bristles, localizes to the bristle tip throughout the elongation period (at protein level).

It is found in the cytoplasm. The protein resides in the cytoskeleton. It localises to the cell projection. Its subcellular location is the axon. The protein localises to the dendrite. It is found in the perikaryon. In terms of biological role, plays a role in oocyte axis determination and microtubule organization during oogenesis. Also required for polarized organization of the bristle. Required, with jvl, for activation of the kinase IKKepsilon in the germ line. Also required for localization of IKKepsilon to the distal tip of elongating bristles by acting as an adapter linking IKKepsilon and cytoplasmic dynein. Involved in dendrite pruning in larval sensory neurons during metamorphosis. This chain is Protein spindle-F, found in Drosophila melanogaster (Fruit fly).